The following is a 454-amino-acid chain: Asparagine--tRNA ligase (454 aa).

The protein belongs to the class-II aminoacyl-tRNA synthetase family. In terms of assembly, homodimer.

It is found in the cytoplasm. It carries out the reaction tRNA(Asn) + L-asparagine + ATP = L-asparaginyl-tRNA(Asn) + AMP + diphosphate + H(+). This is Asparagine--tRNA ligase from Ureaplasma urealyticum serovar 10 (strain ATCC 33699 / Western).